Here is a 554-residue protein sequence, read N- to C-terminus: Afadin- and alpha-actinin-binding protein A (554 aa).

Coiled-coil stretches lie at residues 122–287 (LEYL…SQRK) and 359–449 (ENGL…AIRL). A disordered region spans residues 508 to 528 (LASSGDYSRRPSKALPITSSS).

Belongs to the ADIP family. In terms of assembly, interacts with WRAP73.

It localises to the cell junction. Its subcellular location is the adherens junction. It is found in the cytoplasm. The protein resides in the cytoskeleton. The protein localises to the microtubule organizing center. It localises to the centrosome. Its subcellular location is the centriolar satellite. In terms of biological role, belongs to an adhesion system, which plays a role in the organization of homotypic, interneuronal and heterotypic cell-cell adherens junctions (AJs). Involved in cell movement. Acts as a centrosome maturation factor, probably by maintaining the integrity of the pericentriolar material and proper microtubule nucleation at mitotic spindle poles. The function seems to implicate at least in part WRAP73; the SSX2IP:WRAP73 complex is proposed to act as regulator of spindle anchoring at the mitotic centrosome. The protein is Afadin- and alpha-actinin-binding protein A (ssx2ip-a) of Xenopus laevis (African clawed frog).